The following is a 356-amino-acid chain: Alanine racemase (356 aa).

K35 acts as the Proton acceptor; specific for D-alanine in catalysis. The residue at position 35 (K35) is an N6-(pyridoxal phosphate)lysine. R130 is a substrate binding site. Residue Y253 is the Proton acceptor; specific for L-alanine of the active site. M301 lines the substrate pocket.

This sequence belongs to the alanine racemase family. Requires pyridoxal 5'-phosphate as cofactor.

The enzyme catalyses L-alanine = D-alanine. It functions in the pathway amino-acid biosynthesis; D-alanine biosynthesis; D-alanine from L-alanine: step 1/1. Its function is as follows. Catalyzes the interconversion of L-alanine and D-alanine. May also act on other amino acids. In Sodalis glossinidius (strain morsitans), this protein is Alanine racemase (alr).